We begin with the raw amino-acid sequence, 426 residues long: Metacaspase-1B (426 aa).

Over residues 1–14 (MSGYPGAGYNGGGY) the composition is skewed to gly residues. Residues 1–111 (MSGYPGAGYN…QAPPPPPQAP (111 aa)) form a disordered region. The segment covering 21-68 (QYGGYYPPQPAYNAYQQPPPQQQQYMVYHQPSPGPQQHQHWNPQQQTP) has biased composition (low complexity). Active-site residues include His217 and Cys273.

This sequence belongs to the peptidase C14B family.

In terms of biological role, involved in cell death (apoptosis). This Neurospora crassa (strain ATCC 24698 / 74-OR23-1A / CBS 708.71 / DSM 1257 / FGSC 987) protein is Metacaspase-1B (casB).